We begin with the raw amino-acid sequence, 469 residues long: Glutamate--tRNA ligase 1 (469 aa).

Residues 9–19 (PSPTGYLHVGG) carry the 'HIGH' region motif. C98, C100, C125, and E127 together coordinate Zn(2+). A 'KMSKS' region motif is present at residues 236 to 240 (RLSKR). K239 contacts ATP.

This sequence belongs to the class-I aminoacyl-tRNA synthetase family. Glutamate--tRNA ligase type 1 subfamily. Monomer. Zn(2+) is required as a cofactor.

It is found in the cytoplasm. It carries out the reaction tRNA(Glu) + L-glutamate + ATP = L-glutamyl-tRNA(Glu) + AMP + diphosphate. In terms of biological role, catalyzes the attachment of glutamate to tRNA(Glu) in a two-step reaction: glutamate is first activated by ATP to form Glu-AMP and then transferred to the acceptor end of tRNA(Glu). The sequence is that of Glutamate--tRNA ligase 1 from Nitrosococcus oceani (strain ATCC 19707 / BCRC 17464 / JCM 30415 / NCIMB 11848 / C-107).